Reading from the N-terminus, the 341-residue chain is Serine/threonine-protein kinase PDIK1L (341 aa).

Residues 8-334 (YDLIREVGRG…LELRLVQIAF (327 aa)) enclose the Protein kinase domain. Residues 14-22 (VGRGSYGVV) and K37 each bind ATP. D164 acts as the Proton acceptor in catalysis.

This sequence belongs to the protein kinase superfamily. Ser/Thr protein kinase family.

It localises to the nucleus. It carries out the reaction L-seryl-[protein] + ATP = O-phospho-L-seryl-[protein] + ADP + H(+). The catalysed reaction is L-threonyl-[protein] + ATP = O-phospho-L-threonyl-[protein] + ADP + H(+). This Mus musculus (Mouse) protein is Serine/threonine-protein kinase PDIK1L (Pdik1l).